The following is a 103-amino-acid chain: Small ribosomal subunit protein uS10 (103 aa).

Belongs to the universal ribosomal protein uS10 family. As to quaternary structure, part of the 30S ribosomal subunit.

Functionally, involved in the binding of tRNA to the ribosomes. In Psychrobacter arcticus (strain DSM 17307 / VKM B-2377 / 273-4), this protein is Small ribosomal subunit protein uS10.